The chain runs to 482 residues: Catalase easC (482 aa).

His58 is a catalytic residue. Tyr347 provides a ligand contact to heme.

This sequence belongs to the catalase family. The cofactor is heme.

It participates in alkaloid biosynthesis; ergot alkaloid biosynthesis. In terms of biological role, catalase; part of the gene cluster that mediates the biosynthesis of fungal ergot alkaloid. DmaW catalyzes the first step of ergot alkaloid biosynthesis by condensing dimethylallyl diphosphate (DMAP) and tryptophan to form 4-dimethylallyl-L-tryptophan. The second step is catalyzed by the methyltransferase easF that methylates 4-dimethylallyl-L-tryptophan in the presence of S-adenosyl-L-methionine, resulting in the formation of 4-dimethylallyl-L-abrine. The catalase easC and the FAD-dependent oxidoreductase easE then transform 4-dimethylallyl-L-abrine to chanoclavine-I which is further oxidized by easD in the presence of NAD(+), resulting in the formation of chanoclavine-I aldehyde. Chanoclavine-I aldehyde is the precursor of ergoamides and ergopeptines in Clavicipitaceae, and clavine-type alcaloids such as fumiclavine in Trichocomaceae. However, the metabolites downstream of chanoclavine-I aldehyde in Arthrodermataceae have not been identified yet. In Arthroderma otae (strain ATCC MYA-4605 / CBS 113480) (Microsporum canis), this protein is Catalase easC.